The following is a 239-amino-acid chain: Retrotransposon Gag-like protein 6 (239 aa).

A coiled-coil region spans residues 29–69; sequence LTSLRLTNSALRREASTLRAEKANLTNMLESVMAELTLLRT. Residues 82–94 show a composition bias toward polar residues; sequence PISSITSNGTRPM. Disordered stretches follow at residues 82 to 106 and 214 to 239; these read PISS…EPFS and TGPC…ARNL. Over residues 228 to 239 the composition is skewed to low complexity; that stretch reads PAPALPARARNL.

This sequence belongs to the LDOC1 family.

This chain is Retrotransposon Gag-like protein 6, found in Homo sapiens (Human).